The primary structure comprises 609 residues: Granule-bound starch synthase 1, chloroplastic/amyloplastic (609 aa).

The transit peptide at 1–77 directs the protein to the chloroplast; the sequence is MSALTTSQLA…SRRFPSVVVY (77 aa). The tract at residues 29–67 is disordered; it reads RHGFQGLKPRSPAGGDATSLSVTTSARATPKQQRSVQRG. The segment covering 46-66 has biased composition (polar residues); it reads TSLSVTTSARATPKQQRSVQR. Residue K97 coordinates ADP-alpha-D-glucose. Residues G100, R408, K413, K462, and Q493 each contribute to the ADP site. C337 and C529 are disulfide-bonded.

It belongs to the glycosyltransferase 1 family. Bacterial/plant glycogen synthase subfamily.

The protein localises to the plastid. It localises to the chloroplast. It is found in the amyloplast. It carries out the reaction an NDP-alpha-D-glucose + [(1-&gt;4)-alpha-D-glucosyl](n) = [(1-&gt;4)-alpha-D-glucosyl](n+1) + a ribonucleoside 5'-diphosphate + H(+). It participates in glycan biosynthesis; starch biosynthesis. Functionally, required for the synthesis of amylose in endosperm. This chain is Granule-bound starch synthase 1, chloroplastic/amyloplastic (WAXY), found in Oryza sativa subsp. indica (Rice).